A 184-amino-acid chain; its full sequence is MWPPDAEPEPDPESAHGPRSGRTVPGLRALLPARAFLCSLKGRLLLAESGLSFITFICYVVSSASAFLTVPLLEFLLAVYFLFADAMQLNDKWQGLCWPMMDFLRCVTAALIYFVISITAVAKYSDGAYKAAGVFGFFATIVFAIDFYLIFNEVAKFLKQGDSGNETTAHRTEEENSNSDSDSD.

A compositionally biased stretch (acidic residues) spans Met1–Pro12. A disordered region spans residues Met1–Arg22. Residues Phe36 to Ala155 form the MARVEL domain. 3 helical membrane-spanning segments follow: residues Ala64 to Ala84, Leu96 to Ile116, and Ala131 to Phe151. A disordered region spans residues Ser163–Asp184. Residues Glu175–Asp184 show a composition bias toward acidic residues.

It belongs to the chemokine-like factor family.

It is found in the membrane. The sequence is that of CKLF-like MARVEL transmembrane domain-containing protein 3 (Cmtm3) from Mus musculus (Mouse).